A 472-amino-acid polypeptide reads, in one-letter code: Eukaryotic translation initiation factor 2 subunit 3B (472 aa).

A2 is subject to N-acetylalanine. Residue S16 is modified to Phosphoserine. The tr-type G domain occupies 39 to 248 (QATINIGTIG…IVKKIPVPPR (210 aa)). A G1 region spans residues 48-55 (GHVAHGKS). 51–56 (AHGKST) serves as a coordination point for GTP. The segment at 76–80 (NITIK) is G2. The G3 stretch occupies residues 134 to 137 (DCPG). Residues 190–193 (NKID) and 225–227 (SAQ) each bind GTP. The G4 stretch occupies residues 190 to 193 (NKID). The tract at residues 225-227 (SAQ) is G5.

This sequence belongs to the TRAFAC class translation factor GTPase superfamily. Classic translation factor GTPase family. EIF2G subfamily. In terms of assembly, eIF2 is a heterotrimer composed of an alpha, a beta and a gamma chain. eIF2 is member of the 43S pre-initiation complex (43S PIC). As to expression, specifically expressed in testis at the mRNA level.

The catalysed reaction is GTP + H2O = GDP + phosphate + H(+). Functionally, member of the eIF2 complex that functions in the early steps of protein synthesis by forming a ternary complex with GTP and initiator tRNA. This complex binds to a 40S ribosomal subunit, followed by mRNA binding to form the 43S pre-initiation complex (43S PIC). Junction of the 60S ribosomal subunit to form the 80S initiation complex is preceded by hydrolysis of the GTP bound to eIF2 and release of an eIF2-GDP binary complex. In order for eIF2 to recycle and catalyze another round of initiation, the GDP bound to eIF2 must exchange with GTP by way of a reaction catalyzed by eIF-2B. This is Eukaryotic translation initiation factor 2 subunit 3B from Homo sapiens (Human).